Here is a 132-residue protein sequence, read N- to C-terminus: Agouti-signaling protein (132 aa).

An N-terminal signal peptide occupies residues 1–22 (MDVTRLLLATLLVFLCFFTVYS). N-linked (GlcNAc...) asparagine glycosylation is present at asparagine 39. Residues 62-93 (ISRKEAEKKRSSKKEASMKKVAQPRTPLSAPC) are disordered. Residues 63-79 (SRKEAEKKRSSKKEASM) are compositionally biased toward basic and acidic residues. 5 cysteine pairs are disulfide-bonded: cysteine 93–cysteine 108, cysteine 100–cysteine 114, cysteine 107–cysteine 125, cysteine 111–cysteine 132, and cysteine 116–cysteine 123. One can recognise an Agouti domain in the interval 93–132 (CVATRDSCKPPAPACCDPCASCQCRFFRSACSCRVLSLNC).

It localises to the secreted. Its function is as follows. Involved in the regulation of melanogenesis. The binding of ASP to MC1R precludes alpha-MSH initiated signaling and thus blocks production of cAMP, leading to a down-regulation of eumelanogenesis (brown/black pigment) and thus increasing synthesis of pheomelanin (yellow/red pigment). The polypeptide is Agouti-signaling protein (ASIP) (Trachypithecus auratus (Javan langur)).